The sequence spans 276 residues: Urease accessory protein UreD (276 aa).

Belongs to the UreD family. In terms of assembly, ureD, UreF and UreG form a complex that acts as a GTP-hydrolysis-dependent molecular chaperone, activating the urease apoprotein by helping to assemble the nickel containing metallocenter of UreC. The UreE protein probably delivers the nickel.

The protein localises to the cytoplasm. Its function is as follows. Required for maturation of urease via the functional incorporation of the urease nickel metallocenter. This is Urease accessory protein UreD from Albidiferax ferrireducens (strain ATCC BAA-621 / DSM 15236 / T118) (Rhodoferax ferrireducens).